A 178-amino-acid chain; its full sequence is MSRIGKQPIAIPSGVDVSVENNVLKFKKGNHLKELDTKGHVDVKIENGHIVFAPKGEDRQSRAYWGTYRALANNIVTGITHGFTRQLEINGVGYKAAAKGKILELSLGFSHLINYELPAGVEASVDKNVITIKGDDKQVVGQVAAQVRGFRPPEPYKGKGVKYLEERIIRKAGKTSKK.

This sequence belongs to the universal ribosomal protein uL6 family. Part of the 50S ribosomal subunit.

This protein binds to the 23S rRNA, and is important in its secondary structure. It is located near the subunit interface in the base of the L7/L12 stalk, and near the tRNA binding site of the peptidyltransferase center. The protein is Large ribosomal subunit protein uL6 of Campylobacter concisus (strain 13826).